Here is a 290-residue protein sequence, read N- to C-terminus: Putative OX-2 membrane glycoprotein homolog (290 aa).

The first 17 residues, 1-17 (MSSLMLRLLPLLYIISA), serve as a signal peptide directing secretion. Topologically, residues 18–267 (HFVLHPETSP…SDETVFTWTV (250 aa)) are extracellular. Positions 23–135 (PETSPSLIYE…TFTVDNEKTS (113 aa)) constitute an Ig-like V-type domain. C41 and C125 are disulfide-bonded. 4 N-linked (GlcNAc...) asparagine; by host glycosylation sites follow: N71, N104, N194, and N202. The Ig-like C2-type domain maps to 146–236 (PIVVLYFRYL…TNQKASALVT (91 aa)). Residues 268-288 (PLILILISVIVLLISVCIVAF) traverse the membrane as a helical segment. Residues 289 to 290 (KS) are Cytoplasmic-facing.

The protein resides in the membrane. The protein is Putative OX-2 membrane glycoprotein homolog (U85) of Homo sapiens (Human).